A 251-amino-acid chain; its full sequence is Triosephosphate isomerase (251 aa).

A substrate-binding site is contributed by 9–11; the sequence is NWK. His95 acts as the Electrophile in catalysis. Catalysis depends on Glu167, which acts as the Proton acceptor. Substrate contacts are provided by residues Gly173, Ser213, and 234–235; that span reads GG.

It belongs to the triosephosphate isomerase family. Homodimer.

The protein resides in the cytoplasm. The enzyme catalyses D-glyceraldehyde 3-phosphate = dihydroxyacetone phosphate. It participates in carbohydrate biosynthesis; gluconeogenesis. Its pathway is carbohydrate degradation; glycolysis; D-glyceraldehyde 3-phosphate from glycerone phosphate: step 1/1. In terms of biological role, involved in the gluconeogenesis. Catalyzes stereospecifically the conversion of dihydroxyacetone phosphate (DHAP) to D-glyceraldehyde-3-phosphate (G3P). In Geobacter metallireducens (strain ATCC 53774 / DSM 7210 / GS-15), this protein is Triosephosphate isomerase.